A 413-amino-acid polypeptide reads, in one-letter code: Transcription factor bHLH23 (413 aa).

Residues 40-75 are disordered; the sequence is SSQTQTPSCDPPLILRGSGSGDGEGNGPLPQPPPPL. A Phosphothreonine modification is found at Thr-186. A Phosphoserine modification is found at Ser-191. 2 disordered regions span residues 232 to 278 and 391 to 413; these read TEPV…RSRA and ETEQETMSLLLREDKRTKQKMFS. Residues 246 to 257 are compositionally biased toward basic and acidic residues; sequence TDERKRKTREET. The region spanning 277–326 is the bHLH domain; the sequence is RAAIMHKLSERRRRQKINEMMKALQELLPRCTKTDRSSMLDDVIEYVKSL.

In terms of assembly, homodimer. Expressed constitutively in leaves, stems, and flowers.

The protein resides in the nucleus. The protein is Transcription factor bHLH23 (BHLH23) of Arabidopsis thaliana (Mouse-ear cress).